A 212-amino-acid chain; its full sequence is FMN-dependent NADH:quinone oxidoreductase (212 aa).

Residues Ser10 and 17 to 19 (SFS) contribute to the FMN site.

The protein belongs to the azoreductase type 1 family. As to quaternary structure, homodimer. It depends on FMN as a cofactor.

It catalyses the reaction 2 a quinone + NADH + H(+) = 2 a 1,4-benzosemiquinone + NAD(+). The catalysed reaction is N,N-dimethyl-1,4-phenylenediamine + anthranilate + 2 NAD(+) = 2-(4-dimethylaminophenyl)diazenylbenzoate + 2 NADH + 2 H(+). Quinone reductase that provides resistance to thiol-specific stress caused by electrophilic quinones. In terms of biological role, also exhibits azoreductase activity. Catalyzes the reductive cleavage of the azo bond in aromatic azo compounds to the corresponding amines. This is FMN-dependent NADH:quinone oxidoreductase from Malacoplasma penetrans (strain HF-2) (Mycoplasma penetrans).